Reading from the N-terminus, the 388-residue chain is 4-hydroxy-3-methylbut-2-en-1-yl diphosphate synthase (flavodoxin) (388 aa).

[4Fe-4S] cluster contacts are provided by C280, C283, C315, and E322. The tract at residues 369-388 (MNSEGGPEATSSGSPVVTVS) is disordered. A compositionally biased stretch (polar residues) spans 377-388 (ATSSGSPVVTVS).

It belongs to the IspG family. The cofactor is [4Fe-4S] cluster.

It catalyses the reaction (2E)-4-hydroxy-3-methylbut-2-enyl diphosphate + oxidized [flavodoxin] + H2O + 2 H(+) = 2-C-methyl-D-erythritol 2,4-cyclic diphosphate + reduced [flavodoxin]. It participates in isoprenoid biosynthesis; isopentenyl diphosphate biosynthesis via DXP pathway; isopentenyl diphosphate from 1-deoxy-D-xylulose 5-phosphate: step 5/6. Functionally, converts 2C-methyl-D-erythritol 2,4-cyclodiphosphate (ME-2,4cPP) into 1-hydroxy-2-methyl-2-(E)-butenyl 4-diphosphate. The sequence is that of 4-hydroxy-3-methylbut-2-en-1-yl diphosphate synthase (flavodoxin) from Mycolicibacterium paratuberculosis (strain ATCC BAA-968 / K-10) (Mycobacterium paratuberculosis).